Reading from the N-terminus, the 180-residue chain is Prorelaxin (180 aa).

Positions 1 to 25 are cleaved as a signal peptide; sequence MLRLFLSHLLGVWLLLSLRARKIPA. 3 disulfide bridges follow: C33-C167, C45-C180, and C166-C171. Positions 53–154 are cleaved as a propeptide — connecting peptide; the sequence is SSQQHREPRQ…RSRLDAHSRI (102 aa).

The protein belongs to the insulin family. In terms of assembly, heterodimer of a B chain and an A chain linked by two disulfide bonds. Expressed by the placenta. Exclusively detected in cells located in the lamellar placental labyrinth and absent from other placental and non-placental uterine parts.

The protein resides in the secreted. In terms of biological role, relaxin is an ovarian hormone that acts with estrogen to produce dilatation of the birth canal in many mammals. The chain is Prorelaxin (RLN) from Felis catus (Cat).